The primary structure comprises 508 residues: MTEPTQTQPAVAADENQIIAERRDKLRALREQGVAYPNDFRPTHHAAELQSTYADSDKAALEANPVEVSVAGRMMLKRVMGKASFATVQDGSGQIQFFVTPNDVGAETYDAFKKWDLGDIVAARGVLFRTNKGELSVQCKELRLLAKALRPLPDKFHGLADQEMRYRQRYVDLIVTPETRDTFRARTKTISSIRRFMENADFMEVETPMLHPIPGGAAAKPFITHHNALDMQMFLRIAPELYLKRLIVGGFERVFEINRNFRNEGVSPRHNPEFTMMEFYAAYTDYRWLMDFTEQLIRQAAIDALGTATIQYQGRELDLAKPFHRLTITQAIQKYAPQYTDGQLSDDAFLRTELKRLGVDVSQPAFLNAGIGALQLALFEETAESQLWEPTYIIDYPVEVSPLARASDTVPGITERFELFMTGREIANGFSELNDPEDQAARFKKQVEQKDAGDEEAMFFDADYIRALEHGMPPTGGCGIGIDRLVMLLTDSPTIRDVLLFPHLRRED.

2 residues coordinate Mg(2+): E418 and E425.

The protein belongs to the class-II aminoacyl-tRNA synthetase family. Homodimer. The cofactor is Mg(2+).

It localises to the cytoplasm. The catalysed reaction is tRNA(Lys) + L-lysine + ATP = L-lysyl-tRNA(Lys) + AMP + diphosphate. In Burkholderia vietnamiensis (strain G4 / LMG 22486) (Burkholderia cepacia (strain R1808)), this protein is Lysine--tRNA ligase.